The following is a 113-amino-acid chain: Hydrogenase maturation factor HypA (113 aa).

Residue His-2 coordinates Ni(2+). Zn(2+) contacts are provided by Cys-70, Cys-73, Cys-86, and Cys-88.

It belongs to the HypA/HybF family.

In terms of biological role, involved in the maturation of [NiFe] hydrogenases. Required for nickel insertion into the metal center of the hydrogenase. The chain is Hydrogenase maturation factor HypA from Nostoc sp. (strain PCC 7120 / SAG 25.82 / UTEX 2576).